Here is an 82-residue protein sequence, read N- to C-terminus: KappaPI-actitoxin-Avd3e (82 aa).

The signal sequence occupies residues 1–16; it reads MVFLLCFFLVADVSYG. In terms of domain architecture, BPTI/Kunitz inhibitor spans 21 to 71; sequence CELPKVVGPCRARFPRYYYNSSSKRCEKFIYGGCGGNANNFHTLEECEKVC. Disulfide bonds link cysteine 21–cysteine 71, cysteine 30–cysteine 54, and cysteine 46–cysteine 67. A propeptide spanning residues 76 to 82 is cleaved from the precursor; that stretch reads RDSPKEN.

It belongs to the venom Kunitz-type family. Sea anemone type 2 potassium channel toxin subfamily.

Its subcellular location is the secreted. It is found in the nematocyst. In terms of biological role, serine protease inhibitor that inhibits both tissue and plasma kallikreins. Has hemolytic activity. Inhibits voltage-gated potassium channels (Kv). In Anemonia viridis (Snakelocks anemone), this protein is KappaPI-actitoxin-Avd3e.